The primary structure comprises 377 residues: Deoxyribonuclease CdiA-o11 (377 aa).

The short motif at 81–84 is the VENN CT cleavage motif element; sequence VENN. The segment at 85-233 is inner membrane translocation domain (IMTD), targets to YciB; the sequence is YLSTNQSLTF…ISFMSRNTAT (149 aa). The tract at residues 88–377 is CT domain, sufficient to interact with CdiI; it reads TNQSLTFDKE…GVKVTVTQVK (290 aa). The segment at 222-377 is has DNase activity in vivo, cannot be expressed in the absence of CdiI; it reads AAISFMSRNT…GVKVTVTQVK (156 aa). Residues Glu-257, Asp-278, Ser-289, and Lys-291 contribute to the active site. Zn(2+) contacts are provided by Glu-257 and Asp-278.

As to quaternary structure, interacts with cognate immunity protein CdiI-o11-EC869, which blocks its toxic DNase activity. Zn(2+) serves as cofactor.

The protein localises to the target cell. The protein resides in the target cell cytoplasm. Toxic component of a toxin-immunity protein module, which functions as a cellular contact-dependent growth inhibition (CDI) system. CDI modules allow bacteria to communicate with and inhibit the growth of closely related neighboring bacteria in a contact-dependent fashion. The C-terminal 289 residues (the CT fragment) has a strong DNase activity in the presence of Zn(2+), completely degrading supercoiled and linear plasmids, and inhibits growth. In the presence of Mg(2+) it nicks dsDNA. Toxic activity is neutralized by coexpression of the cognate immunity protein CdiI-o11-EC869, but not by non-cognate immunity proteins from other toxin-immunity modules or other strains of E.coli. Gains access to the cytoplasm of target cells by using integral inner membrane protein YciB. Its function is as follows. Expression of this locus confers protection against other bacteria carrying the locus. This is Deoxyribonuclease CdiA-o11 (cdiA4) from Escherichia coli O157:H7 (strain EC869).